Reading from the N-terminus, the 40-residue chain is Fibrinolytic protease (40 aa).

The Peptidase S1 domain maps to 1–40; the sequence is IVGGNEVTPHAYPWQVGLFIDDMYFCGGSISVTLTGWGKP.

It belongs to the peptidase S1 family.

It is found in the secreted. It localises to the extracellular space. Its function is as follows. Serine protease with fibrinolytic activity. This is Fibrinolytic protease from Euphausia superba (Antarctic krill).